Reading from the N-terminus, the 197-residue chain is Holliday junction branch migration complex subunit RuvA (197 aa).

The interval 1–64 (MYEYIKGKYI…EDFIGVYGFL (64 aa)) is domain I. The segment at 65-144 (TKDELSMFKL…DILEEDDEQI (80 aa)) is domain II. The flexible linker stretch occupies residues 145–149 (INKVA). Residues 149–197 (ADDKKVLEAVAALVTLGYSEKEANKVINSCDKNNSLEQIIKEALKYLMK) form a domain III region.

Belongs to the RuvA family. In terms of assembly, homotetramer. Forms an RuvA(8)-RuvB(12)-Holliday junction (HJ) complex. HJ DNA is sandwiched between 2 RuvA tetramers; dsDNA enters through RuvA and exits via RuvB. An RuvB hexamer assembles on each DNA strand where it exits the tetramer. Each RuvB hexamer is contacted by two RuvA subunits (via domain III) on 2 adjacent RuvB subunits; this complex drives branch migration. In the full resolvosome a probable DNA-RuvA(4)-RuvB(12)-RuvC(2) complex forms which resolves the HJ.

The protein resides in the cytoplasm. In terms of biological role, the RuvA-RuvB-RuvC complex processes Holliday junction (HJ) DNA during genetic recombination and DNA repair, while the RuvA-RuvB complex plays an important role in the rescue of blocked DNA replication forks via replication fork reversal (RFR). RuvA specifically binds to HJ cruciform DNA, conferring on it an open structure. The RuvB hexamer acts as an ATP-dependent pump, pulling dsDNA into and through the RuvAB complex. HJ branch migration allows RuvC to scan DNA until it finds its consensus sequence, where it cleaves and resolves the cruciform DNA. The sequence is that of Holliday junction branch migration complex subunit RuvA from Clostridium botulinum (strain ATCC 19397 / Type A).